We begin with the raw amino-acid sequence, 197 residues long: MTDSPQPIQLIVGLGNPGDRYAGTRHNAGFWLLDELLRRHGGALRPERRYHADLATLHLGPHQCRLMRPQTYMNRSGQAVGPYAQFFRLPPESILVVHDEIDLPPGQVKLKQGGGHGGHNGLRDIIRALGNERGFCRARIGVGHPGHRDGVVPYVLSRPAPDERRAIADAVEELADCVEWLLAGDWGRACQRLHSRS.

Tyr-21 lines the tRNA pocket. The active-site Proton acceptor is His-26. Residues Tyr-72, Asn-74, and Asn-120 each contribute to the tRNA site.

This sequence belongs to the PTH family. As to quaternary structure, monomer.

The protein localises to the cytoplasm. The catalysed reaction is an N-acyl-L-alpha-aminoacyl-tRNA + H2O = an N-acyl-L-amino acid + a tRNA + H(+). In terms of biological role, hydrolyzes ribosome-free peptidyl-tRNAs (with 1 or more amino acids incorporated), which drop off the ribosome during protein synthesis, or as a result of ribosome stalling. Functionally, catalyzes the release of premature peptidyl moieties from peptidyl-tRNA molecules trapped in stalled 50S ribosomal subunits, and thus maintains levels of free tRNAs and 50S ribosomes. The protein is Peptidyl-tRNA hydrolase of Alkalilimnicola ehrlichii (strain ATCC BAA-1101 / DSM 17681 / MLHE-1).